A 329-amino-acid chain; its full sequence is MNKITLPIGMHDKLFKRARVTYEIERDISDFLMAQGFNRIDTPTLEHFEVFSDHVEPHHYHLFDKKGELLVLRPDVTSQIGRVIASTRVHTPTKFSYSGKVFHYQEELRGLANELSQAGIEIIGYPAREAVLEAIKTAKQSLDLAQVKSYQFEFSHAAILQTILESLVLDSQEEAQLLDYIRKKNRTGIFEFTQSRPSEFDDFLQELPYLFGPSQQVLARAREIVDNERILTALDDVEQVLRSLSDLLDQTTMDLGQVATMPYYTGLTFKVFGDRVPDAFLSGGRYDQLFKRFGATELTAIGWSLDIDSVYQAIHDDLPDEGGKEGDGR.

Belongs to the class-II aminoacyl-tRNA synthetase family. HisZ subfamily. As to quaternary structure, heteromultimer composed of HisG and HisZ subunits.

The protein resides in the cytoplasm. The protein operates within amino-acid biosynthesis; L-histidine biosynthesis; L-histidine from 5-phospho-alpha-D-ribose 1-diphosphate: step 1/9. Required for the first step of histidine biosynthesis. May allow the feedback regulation of ATP phosphoribosyltransferase activity by histidine. In Streptococcus gordonii (strain Challis / ATCC 35105 / BCRC 15272 / CH1 / DL1 / V288), this protein is ATP phosphoribosyltransferase regulatory subunit.